The sequence spans 528 residues: MGDAPSPEEKLHLITRNLQEVLGEEKLKEILKERELKIYWGTATTGKPHVAYFVPMSKIADFLKAGCEVTILFADLHAYLDNMKAPWELLELRVSYYENVIKAMLESIGVPLEKLTFIKGTDYQLSKEYTLDVYRLSSVVTQHDSKKAGAEVVKQVEHPLLSGLLYPGLQALDEEYLKVDAQFGGVDQRKIFTFAEKYLPALGYSKRVHLMNPMVPGLTGSKMSSSEEESKIDLLDRKEDVKKKLKKAFCEPGNVENNGVLSFIKHVLFPLKSEFVILRDERWGGNKTYTAYMDLEKDFAAEVVHPGDLKNSVDVALNKLLDPIREKFNTPALKKLASAAYPDPSKQKPMAKGPAKNSEPEEVIPSRLDIRVGKIITVEKHPDADSLYVEKIDVGEAEPRTVVSGLVQFVPKEELQDRLVVVLCNLKPQKMRGVESQGMLLCASIEGINRQVEPLDPPAGSAPGERVFVKGYEKGQPDEELKPKKKVFEKLQADFKISEECIAQWKQTNFMTKLGSISCKSLKGGNIS.

Met-1 carries the N-acetylmethionine modification. Gly-2 is subject to N-acetylglycine; in Tyrosine--tRNA ligase, cytoplasmic, N-terminally processed. Tyr-39 serves as a coordination point for L-tyrosine. Tyr-39 contacts trans-resveratrol. Residues Thr-44–Tyr-52 carry the 'HIGH' region motif. 4 residues coordinate L-tyrosine: Tyr-166, Gln-170, Asp-173, and Gln-188. Residues Gln-170 and Asp-173 each coordinate trans-resveratrol. Lys-197 carries the post-translational modification N6-acetyllysine. A Phosphoserine modification is found at Ser-205. At Lys-206 the chain carries N6-acetyllysine. A 'KMSKS' region motif is present at residues Lys-222–Ser-226. Residues Lys-242–Lys-247 carry the Nuclear localization signal motif. The disordered stretch occupies residues Ala-339–Val-363. The tRNA-binding domain maps to Ile-364–Phe-468. Phosphoserine is present on Ser-386. 3 positions are modified to N6-acetyllysine: Lys-474, Lys-482, and Lys-490.

This sequence belongs to the class-I aminoacyl-tRNA synthetase family. As to quaternary structure, homodimer. Interacts (when binding to resveratrol) with PARP1; interaction stimulates the poly-ADP-ribosyltransferase activity of PARP1.

It is found in the cytoplasm. The protein localises to the nucleus. The enzyme catalyses tRNA(Tyr) + L-tyrosine + ATP = L-tyrosyl-tRNA(Tyr) + AMP + diphosphate + H(+). Its activity is regulated as follows. Resveratrol strongly inhibits the tyrosine--tRNA ligase activity. Functionally, tyrosine--tRNA ligase that catalyzes the attachment of tyrosine to tRNA(Tyr) in a two-step reaction: tyrosine is first activated by ATP to form Tyr-AMP and then transferred to the acceptor end of tRNA(Tyr). Also acts as a positive regulator of poly-ADP-ribosylation in the nucleus, independently of its tyrosine--tRNA ligase activity. Activity is switched upon resveratrol-binding: resveratrol strongly inhibits the tyrosine--tRNA ligase activity and promotes relocalization to the nucleus, where YARS1 specifically stimulates the poly-ADP-ribosyltransferase activity of PARP1. This chain is Tyrosine--tRNA ligase, cytoplasmic (YARS1), found in Pongo abelii (Sumatran orangutan).